We begin with the raw amino-acid sequence, 444 residues long: C4-dicarboxylate transport protein (444 aa).

Helical transmembrane passes span 17–37, 57–77, 92–112, 139–159, 161–181, 201–221, 234–254, 320–340, and 368–388; these read PFYT…ILLG, LVKM…IAGM, LYFL…ANVV, EQSI…GAFA, GDIL…AMVG, LVAI…AFTI, MLIG…LGAV, IYMT…LSWG, and AATL…ILGI.

This sequence belongs to the dicarboxylate/amino acid:cation symporter (DAACS) (TC 2.A.23) family.

The protein localises to the cell inner membrane. Functionally, responsible for the transport of dicarboxylates such as succinate, fumarate, and malate from the periplasm across the membrane. In Rhizobium johnstonii (strain DSM 114642 / LMG 32736 / 3841) (Rhizobium leguminosarum bv. viciae), this protein is C4-dicarboxylate transport protein.